Consider the following 325-residue polypeptide: N-acetyl-gamma-glutamyl-phosphate reductase (325 aa).

The active site involves Cys131.

It belongs to the NAGSA dehydrogenase family. Type 1 subfamily.

The protein resides in the cytoplasm. It catalyses the reaction N-acetyl-L-glutamate 5-semialdehyde + phosphate + NADP(+) = N-acetyl-L-glutamyl 5-phosphate + NADPH + H(+). Its pathway is amino-acid biosynthesis; L-arginine biosynthesis; N(2)-acetyl-L-ornithine from L-glutamate: step 3/4. In terms of biological role, catalyzes the NADPH-dependent reduction of N-acetyl-5-glutamyl phosphate to yield N-acetyl-L-glutamate 5-semialdehyde. The protein is N-acetyl-gamma-glutamyl-phosphate reductase of Methylobacterium sp. (strain 4-46).